The chain runs to 210 residues: Protein GET1 (210 aa).

The Lumenal segment spans residues 1 to 4; sequence MASL. Residues 5-24 traverse the membrane as a helical segment; the sequence is LIIVFLSHVVTYLINTIGAT. The Cytoplasmic segment spans residues 25 to 110; the sequence is TVDNLLWLLY…SFDLTVKSVR (86 aa). A coiled-coil region spans residues 43–97; sequence RTAVEQRRLKGEVVQLKREMKSTSSQDEFAKWAKLRRRHDKAMEEYEAKNKALGK. The helical transmembrane segment at 111–131 threads the bilayer; sequence FFSTTGLKFFLQFWYSKTPMF. Residues 132 to 155 lie on the Lumenal side of the membrane; it reads ELPRGWVPWQVEWVLSFPRAPLGT. The chain crosses the membrane as a helical span at residues 156-172; sequence VSIQVWSGVCTTVVSLA. Over 173–210 the chain is Cytoplasmic; it reads GDALGVVIQSLILKMTKRGVARTSEGRPSQPMALKKEL.

It belongs to the WRB/GET1 family. Interacts with GET3.

The protein resides in the endoplasmic reticulum membrane. Functionally, required for the post-translational delivery of tail-anchored (TA) proteins to the endoplasmic reticulum. Acts as a membrane receptor for soluble GET3, which recognizes and selectively binds the transmembrane domain of TA proteins in the cytosol. This is Protein GET1 from Uncinocarpus reesii (strain UAMH 1704).